The chain runs to 273 residues: Cytoplasmic phosphatidylinositol transfer protein 1 (273 aa).

The tract at residues Q244–D273 is disordered.

The protein belongs to the PtdIns transfer protein family. PI transfer class IIB subfamily.

Its function is as follows. Phosphatidylinositol transfer proteins mediate the monomeric transport of lipids by shielding a lipid from the aqueous environment and binding the lipid in a hydrophobic cavity. This is Cytoplasmic phosphatidylinositol transfer protein 1 (rdgBbeta) from Drosophila melanogaster (Fruit fly).